Consider the following 148-residue polypeptide: Large-conductance mechanosensitive channel (148 aa).

Helical transmembrane passes span 9 to 29 (AFAV…GAAF) and 79 to 99 (IQTV…VKAI).

The protein belongs to the MscL family. As to quaternary structure, homopentamer.

It localises to the cell inner membrane. Channel that opens in response to stretch forces in the membrane lipid bilayer. May participate in the regulation of osmotic pressure changes within the cell. The protein is Large-conductance mechanosensitive channel of Pseudomonas syringae pv. syringae (strain B728a).